The chain runs to 373 residues: SH3 domain-binding protein 5-like (373 aa).

Positions 1 to 36 (MEGKEGPPCEVRLPTPGAEREGPVHPELGAFGESAS) are disordered. Coiled coils occupy residues 35–98 (ASDA…ESAR) and 170–258 (WQEM…KLRY). Disordered regions lie at residues 274-308 (ARRT…PADT) and 332-373 (DLTD…SVSL). A compositionally biased stretch (basic and acidic residues) spans 332-360 (DLTDVTSLDGRETGAVESGGSRERGEDRG).

Belongs to the SH3BP5 family.

Functions as a guanine nucleotide exchange factor (GEF) for rab11a. The protein is SH3 domain-binding protein 5-like (sh3bp5l) of Xenopus laevis (African clawed frog).